The chain runs to 943 residues: Sodium- and chloride-dependent GABA transporter ine (943 aa).

Over 1–345 (MAENKDVSQV…RQQHWANKMQ (345 aa)) the chain is Cytoplasmic. The segment at 103–122 (HKQSPLRHTSVRTRPSSEVL) is disordered. The next 3 helical transmembrane spans lie at 346–366 (FVLA…FPYM), 373–393 (GVFL…LLFM), and 418–438 (GAGL…SVII). Topologically, residues 439-510 (GYSIYYFFTS…GLEYPGMMRW (72 aa)) are extracellular. N-linked (GlcNAc...) asparagine glycosylation occurs at asparagine 476. The next 9 membrane-spanning stretches (helical) occupy residues 511–531 (ELFA…WKSI), 539–559 (YFTA…AVTL), 591–607 (FNSL…FASY), 618–638 (TVAV…FAFS), 679–699 (WAVM…FAIV), 723–743 (IVVL…IIQG), 754–774 (YAAS…IAWF), 799–819 (CWLV…LINY), and 836–856 (YGIG…YAVI). At 857–943 (NFLRSSGDTF…HAEAGGPCGQ (87 aa)) the chain is on the cytoplasmic side.

It belongs to the sodium:neurotransmitter symporter (SNF) (TC 2.A.22) family. As to expression, expressed both maternally and zygotically. Developing embryos exhibit expression in the posterior hindgut, foregut, midgut, Malpighian tubules, anal plate, Garland cells, and a subset of cells in the central nervous system. Central nervous system expression is seen in segmentally repeating in cells flanking the midline of the ventral ganglion. Isoform A and isoform B are colocalized in both the nervous system and the fluid reabsorption system.

It is found in the membrane. Its function is as follows. Plays a role in neuronal membrane excitation, important for normal response properties of the photoreceptor. Able to control excitability from either neurons or glia cells. Ine negatively regulates neuronal sodium channels. Controls neurotransmitter-mediated signaling pathways associated with the structure of the larval peripheral nerve, ine and eag control perineurial glial growth through partially redundant pathways. Isoform A and isoform B are both functional, although isoform A functions with greater efficiency. Has a role in osmolyte transport within the Malpighian tubule and hindgut. This chain is Sodium- and chloride-dependent GABA transporter ine, found in Drosophila melanogaster (Fruit fly).